The sequence spans 262 residues: tRNA pseudouridine synthase A (262 aa).

The active-site Nucleophile is Asp-51. Tyr-109 is a binding site for substrate.

It belongs to the tRNA pseudouridine synthase TruA family. In terms of assembly, homodimer.

It carries out the reaction uridine(38/39/40) in tRNA = pseudouridine(38/39/40) in tRNA. Formation of pseudouridine at positions 38, 39 and 40 in the anticodon stem and loop of transfer RNAs. This is tRNA pseudouridine synthase A from Actinobacillus pleuropneumoniae serotype 7 (strain AP76).